We begin with the raw amino-acid sequence, 211 residues long: Dual specificity protein phosphatase 26 (211 aa).

One can recognise a Tyrosine-protein phosphatase domain in the interval Asn60–Gln207. Cys152 functions as the Phosphocysteine intermediate in the catalytic mechanism.

Belongs to the protein-tyrosine phosphatase family. Non-receptor class dual specificity subfamily. Interacts with HSF4.

The protein localises to the cytoplasm. Its subcellular location is the nucleus. It is found in the golgi apparatus. It catalyses the reaction O-phospho-L-tyrosyl-[protein] + H2O = L-tyrosyl-[protein] + phosphate. The catalysed reaction is O-phospho-L-seryl-[protein] + H2O = L-seryl-[protein] + phosphate. The enzyme catalyses O-phospho-L-threonyl-[protein] + H2O = L-threonyl-[protein] + phosphate. Its function is as follows. Inactivates MAPK1 and MAPK3 which leads to dephosphorylation of heat shock factor protein 4 and a reduction in its DNA-binding activity. The chain is Dual specificity protein phosphatase 26 (DUSP26) from Bos taurus (Bovine).